An 85-amino-acid chain; its full sequence is Large ribosomal subunit protein bL31B (85 aa).

It belongs to the bacterial ribosomal protein bL31 family. Type B subfamily. In terms of assembly, part of the 50S ribosomal subunit.

The protein is Large ribosomal subunit protein bL31B of Clavibacter michiganensis subsp. michiganensis (strain NCPPB 382).